The sequence spans 319 residues: 12-(S)-hydroxy-5,8,10,14-eicosatetraenoic acid receptor (319 aa).

The Extracellular segment spans residues 1 to 16 (MPFPNCSAPSTVVATA). Asn5 is a glycosylation site (N-linked (GlcNAc...) asparagine). The helical transmembrane segment at 17-37 (VGVLLGLECGLGLLGNAVALW) threads the bilayer. At 38–52 (TFLFRVRVWKPYAVY) the chain is on the cytoplasmic side. The helical transmembrane segment at 53 to 73 (LLNLALADLLLAACLPFLAAF) threads the bilayer. The Extracellular portion of the chain corresponds to 74–91 (YLSLQAWHLGRVGCWALH). A helical membrane pass occupies residues 92-110 (FLLDLSRSVGMAFLAAVAL). The Cytoplasmic segment spans residues 111 to 131 (DRYLRVVHPRLKVNLLSPQAA). Residues 132-152 (LGVSGLVWLLMVALTCPGLLI) traverse the membrane as a helical segment. Residues 153–180 (SEAAQNSTRCHSFYSRADGSFSIIWQEA) are Extracellular-facing. A helical transmembrane segment spans residues 181–201 (LSCLQFVLPFGLIVFCNAGII). Over 202–219 (RALQKRLREPEKQPKLQR) the chain is Cytoplasmic. Residues 220–240 (AQALVTLVVVLFALCFLPCFL) form a helical membrane-spanning segment. At 241 to 265 (ARVLMHIFQNLGSCRALCAVAHTSD) the chain is on the extracellular side. A helical transmembrane segment spans residues 266 to 284 (VTGSLTYLHSVLNPVVYCF). Over 285–319 (SSPTFRSSYRRVFHTLRGKGQAAEPPDFNPRDSYS) the chain is Cytoplasmic.

It belongs to the G-protein coupled receptor 1 family. As to quaternary structure, interacts with KRAS; in a farnesylation-dependent manner.

It is found in the cell membrane. High-affinity receptor for 12-(S)-hydroxy-5,8,10,14-eicosatetraenoic acid (12-S-HETE), with much lower affinities for other HETE isomers. 12-S-HETE is a eicosanoid, a 12-lipoxygenase (ALOX12) metabolite of arachidonic acid, involved in many physiologic and pathologic processes. 12-S-HETE-binding leads to activation of ERK1/2 (MAPK3/MAPK1), MEK, and NF-kappa-B pathways leading to cell growth. Plays a crucial role for proliferation, survival and macropinocytosis of KRAS-dependent cancer cells by mediating the translocation of KRAS from the endoplasmic reticulum to the plasma membrane (PM) and its association with the PM. Contributes to enhanced immune responses by inducing dendrite protrusion of small intestinal CX3CR1(+) phagocytes for the uptake of luminal antigens. Acts also as a key receptor for 12-(S)-HETE-mediated liver ischemia reperfusion injury. Its function is as follows. Proton-sensing G protein-coupled receptor. This is 12-(S)-hydroxy-5,8,10,14-eicosatetraenoic acid receptor (GPR31) from Homo sapiens (Human).